The sequence spans 1109 residues: Carbamoyl phosphate synthase large chain (1109 aa).

A carboxyphosphate synthetic domain region spans residues 1–402 (MPKRTDLKSV…ALQKALRSLE (402 aa)). The ATP site is built by R129, R169, G175, G176, E208, I210, E215, G241, V242, H243, Q285, and E299. Residues 133-328 (KGVVERCGAE…IAKIATKLSL (196 aa)) enclose the ATP-grasp 1 domain. Q285, E299, and N301 together coordinate Mg(2+). Q285, E299, and N301 together coordinate Mn(2+). An oligomerization domain region spans residues 403 to 546 (QKGSQLDFSS…YHYSAYDEED (144 aa)). The interval 547-950 (EVALHSKPSI…AFAKSQAGAN (404 aa)) is carbamoyl phosphate synthetic domain. Positions 677–868 (SRVLDKAGLV…MAKAAALIGT (192 aa)) constitute an ATP-grasp 2 domain. Positions 713, 752, 754, 759, 784, 785, 786, 787, 827, and 839 each coordinate ATP. Q827, E839, and N841 together coordinate Mg(2+). Mn(2+) is bound by residues Q827, E839, and N841. An MGS-like domain is found at 951 to 1096 (NALPTEGKVF…QEHAAALGES (146 aa)). Residues 951–1109 (NALPTEGKVF…AAAKADLQHA (159 aa)) are allosteric domain.

It belongs to the CarB family. In terms of assembly, composed of two chains; the small (or glutamine) chain promotes the hydrolysis of glutamine to ammonia, which is used by the large (or ammonia) chain to synthesize carbamoyl phosphate. Tetramer of heterodimers (alpha,beta)4. It depends on Mg(2+) as a cofactor. The cofactor is Mn(2+).

The enzyme catalyses hydrogencarbonate + L-glutamine + 2 ATP + H2O = carbamoyl phosphate + L-glutamate + 2 ADP + phosphate + 2 H(+). The catalysed reaction is hydrogencarbonate + NH4(+) + 2 ATP = carbamoyl phosphate + 2 ADP + phosphate + 2 H(+). Its pathway is amino-acid biosynthesis; L-arginine biosynthesis; carbamoyl phosphate from bicarbonate: step 1/1. It participates in pyrimidine metabolism; UMP biosynthesis via de novo pathway; (S)-dihydroorotate from bicarbonate: step 1/3. Functionally, large subunit of the glutamine-dependent carbamoyl phosphate synthetase (CPSase). CPSase catalyzes the formation of carbamoyl phosphate from the ammonia moiety of glutamine, carbonate, and phosphate donated by ATP, constituting the first step of 2 biosynthetic pathways, one leading to arginine and/or urea and the other to pyrimidine nucleotides. The large subunit (synthetase) binds the substrates ammonia (free or transferred from glutamine from the small subunit), hydrogencarbonate and ATP and carries out an ATP-coupled ligase reaction, activating hydrogencarbonate by forming carboxy phosphate which reacts with ammonia to form carbamoyl phosphate. The polypeptide is Carbamoyl phosphate synthase large chain (Pseudarthrobacter chlorophenolicus (strain ATCC 700700 / DSM 12829 / CIP 107037 / JCM 12360 / KCTC 9906 / NCIMB 13794 / A6) (Arthrobacter chlorophenolicus)).